Here is a 230-residue protein sequence, read N- to C-terminus: Cytochrome c oxidase subunit 2 (230 aa).

Residues methionine 1–serine 14 are Mitochondrial intermembrane-facing. Residues proline 15 to threonine 45 traverse the membrane as a helical segment. The Mitochondrial matrix segment spans residues alanine 46–glutamine 59. The chain crosses the membrane as a helical span at residues glutamate 60–methionine 87. Residues aspartate 88–alanine 230 are Mitochondrial intermembrane-facing. Cu cation is bound by residues histidine 161, cysteine 196, glutamate 198, cysteine 200, histidine 204, and methionine 207. A Mg(2+)-binding site is contributed by glutamate 198.

This sequence belongs to the cytochrome c oxidase subunit 2 family. Component of the cytochrome c oxidase (complex IV, CIV), a multisubunit enzyme composed of 14 subunits. The complex is composed of a catalytic core of 3 subunits MT-CO1, MT-CO2 and MT-CO3, encoded in the mitochondrial DNA, and 11 supernumerary subunits COX4I, COX5A, COX5B, COX6A, COX6B, COX6C, COX7A, COX7B, COX7C, COX8 and NDUFA4, which are encoded in the nuclear genome. The complex exists as a monomer or a dimer and forms supercomplexes (SCs) in the inner mitochondrial membrane with NADH-ubiquinone oxidoreductase (complex I, CI) and ubiquinol-cytochrome c oxidoreductase (cytochrome b-c1 complex, complex III, CIII), resulting in different assemblies (supercomplex SCI(1)III(2)IV(1) and megacomplex MCI(2)III(2)IV(2)). Found in a complex with TMEM177, COA6, COX18, COX20, SCO1 and SCO2. Interacts with TMEM177 in a COX20-dependent manner. Interacts with COX20. Interacts with COX16. The cofactor is Cu cation.

Its subcellular location is the mitochondrion inner membrane. It carries out the reaction 4 Fe(II)-[cytochrome c] + O2 + 8 H(+)(in) = 4 Fe(III)-[cytochrome c] + 2 H2O + 4 H(+)(out). Its function is as follows. Component of the cytochrome c oxidase, the last enzyme in the mitochondrial electron transport chain which drives oxidative phosphorylation. The respiratory chain contains 3 multisubunit complexes succinate dehydrogenase (complex II, CII), ubiquinol-cytochrome c oxidoreductase (cytochrome b-c1 complex, complex III, CIII) and cytochrome c oxidase (complex IV, CIV), that cooperate to transfer electrons derived from NADH and succinate to molecular oxygen, creating an electrochemical gradient over the inner membrane that drives transmembrane transport and the ATP synthase. Cytochrome c oxidase is the component of the respiratory chain that catalyzes the reduction of oxygen to water. Electrons originating from reduced cytochrome c in the intermembrane space (IMS) are transferred via the dinuclear copper A center (CU(A)) of subunit 2 and heme A of subunit 1 to the active site in subunit 1, a binuclear center (BNC) formed by heme A3 and copper B (CU(B)). The BNC reduces molecular oxygen to 2 water molecules using 4 electrons from cytochrome c in the IMS and 4 protons from the mitochondrial matrix. The sequence is that of Cytochrome c oxidase subunit 2 (mt-co2) from Tetraodon nigroviridis (Spotted green pufferfish).